Reading from the N-terminus, the 185-residue chain is UPF0301 protein IL2218 (185 aa).

This sequence belongs to the UPF0301 (AlgH) family.

This chain is UPF0301 protein IL2218, found in Idiomarina loihiensis (strain ATCC BAA-735 / DSM 15497 / L2-TR).